The sequence spans 513 residues: ATP synthase subunit alpha (513 aa).

169–176 (GDRQTGKT) contacts ATP.

This sequence belongs to the ATPase alpha/beta chains family. F-type ATPases have 2 components, CF(1) - the catalytic core - and CF(0) - the membrane proton channel. CF(1) has five subunits: alpha(3), beta(3), gamma(1), delta(1), epsilon(1). CF(0) has three main subunits: a(1), b(2) and c(9-12). The alpha and beta chains form an alternating ring which encloses part of the gamma chain. CF(1) is attached to CF(0) by a central stalk formed by the gamma and epsilon chains, while a peripheral stalk is formed by the delta and b chains.

The protein localises to the cell inner membrane. It carries out the reaction ATP + H2O + 4 H(+)(in) = ADP + phosphate + 5 H(+)(out). Functionally, produces ATP from ADP in the presence of a proton gradient across the membrane. The alpha chain is a regulatory subunit. The chain is ATP synthase subunit alpha from Enterobacter sp. (strain 638).